Reading from the N-terminus, the 2488-residue chain is Neuron navigator 2 (2488 aa).

The 108-residue stretch at 85 to 192 (GFDTQIYTDW…LFFSLSRYKQ (108 aa)) folds into the Calponin-homology (CH) domain. Low complexity-rich tracts occupy residues 194–204 (QQQPQKQHLSS), 221–247 (QAGT…PHQQ), and 255–267 (QSSA…SQSK). Disordered stretches follow at residues 194–675 (QQQP…GSNT) and 706–727 (TEGN…SHFT). Positions 299–315 (GGSTTANNRRSQSFNNY) are enriched in polar residues. The segment covering 356–369 (SGSSSTPTNCSTSS) has biased composition (low complexity). Residues 384–396 (KSLSVKHSATVSM) show a composition bias toward polar residues. Residues 401-410 (PPGPEAPRPT) show a composition bias toward pro residues. The segment covering 492–506 (RTFSRALTNKKSSLK) has biased composition (polar residues). Residues 498-531 (LTNKKSSLKGNEKEKEKQQREKDKEKSKDLAKRA) adopt a coiled-coil conformation. Positions 507-547 (GNEKEKEKQQREKDKEKSKDLAKRASVTERLDLKEEPKEDP) are enriched in basic and acidic residues. A compositionally biased stretch (low complexity) spans 592–606 (MKSMPGKSPSAPAPS). Residues 615 to 626 (GKLSSGLPQQKP) show a composition bias toward polar residues. Low complexity-rich tracts occupy residues 633–642 (SSSSSSLASS) and 657–675 (SSQT…GSNT). Positions 706-719 (TEGNVTAESSSTGV) are enriched in polar residues. Residues 743 to 771 (EARRLRTVKNIADLRQNLEETMSSLRGTQ) are a coiled coil. Disordered regions lie at residues 804 to 824 (LSWR…PSMG), 939 to 1151 (LGLG…QSGS), 1177 to 1200 (KSSA…NQDD), 1213 to 1283 (YRSL…SDNE), 1295 to 1338 (PAAQ…PIAT), 1355 to 1412 (MTQQ…TNAS), 1440 to 1460 (SLSS…ASSK), 1473 to 1560 (VKTT…VTSP), and 1591 to 1629 (SLSN…SFRD). The segment covering 939–985 (LGLGDADSWDDSSSVSSGISDTIDNLSTDDINTSSSISSYANTPASS) has biased composition (low complexity). Positions 1091-1102 (KTDDAKVSEKGR) are enriched in basic and acidic residues. Positions 1130–1142 (PSSSRTPTANANS) are enriched in polar residues. The segment covering 1220-1245 (SKSNSRNGAGNRSSTSSIDSNISSKS) has biased composition (low complexity). The segment covering 1299–1309 (PVSSPAQTSLQ) has biased composition (polar residues). Low complexity-rich tracts occupy residues 1363–1380 (SPSG…PLYS) and 1388–1404 (SPLA…PSNS). Over residues 1440-1456 (SLSSGGVPSHNSSTGLI) the composition is skewed to polar residues. The segment covering 1477–1489 (LSESPLSSPAASP) has biased composition (low complexity). A phosphoserine mark is found at serine 1480, serine 1484, and serine 1488. Basic and acidic residues-rich tracts occupy residues 1498–1510 (RKQD…DRNT) and 1526–1535 (TQEDAKEWLR). The span at 1549–1560 (SPFSSGSSVTSP) shows a compositional bias: low complexity. Residues 1686–1773 (EEKCQSEIRK…AAAQAAINGV (88 aa)) adopt a coiled-coil conformation. Disordered regions lie at residues 1790–1887 (ADLR…LRNS) and 1951–1985 (AEND…MGLS). Composition is skewed to polar residues over residues 1800–1820 (SDSV…SNIE), 1875–1887 (NGST…LRNS), and 1959–1985 (ESQG…MGLS). Residues 1897 to 1964 (MDSEAETVMQ…RLKSESQGSG (68 aa)) are a coiled coil. A Phosphoserine modification is found at serine 1977. 2157–2164 (GPSGTGKT) is an ATP binding site. The interval 2423 to 2488 (DGYSMPREGS…ILDSSLESTL (66 aa)) is disordered. Positions 2460–2473 (YSSPQSYDSDSNSN) are enriched in low complexity.

This sequence belongs to the Nav/unc-53 family. In terms of tissue distribution, highly expressed in the brain, kidney and liver. Also expressed in the thyroid, mammary gland, spinal cord, heart, placenta and lung. Abundantly expressed in colon cancers.

Its subcellular location is the nucleus. The catalysed reaction is ATP + H2O = ADP + phosphate + H(+). Functionally, possesses 3' to 5' helicase activity and exonuclease activity. Involved in neuronal development, specifically in the development of different sensory organs. The chain is Neuron navigator 2 (NAV2) from Homo sapiens (Human).